Reading from the N-terminus, the 276-residue chain is Small ribosomal subunit protein uS3 (276 aa).

The 69-residue stretch at 38 to 106 folds into the KH type-2 domain; the sequence is IRRMMTKGME…QVQLNILEVK (69 aa). Residues 216-228 are compositionally biased toward low complexity; sequence NAAARAGNRPARG. A disordered region spans residues 216–276; it reads NAAARAGNRP…PAAESTGTEA (61 aa). Over residues 229–245 the composition is skewed to basic and acidic residues; that stretch reads GADRPAGRGGRGGERGG. Residues 254–269 show a composition bias toward low complexity; the sequence is PAAEAPKADAAAAPAA.

It belongs to the universal ribosomal protein uS3 family. As to quaternary structure, part of the 30S ribosomal subunit. Forms a tight complex with proteins S10 and S14.

Binds the lower part of the 30S subunit head. Binds mRNA in the 70S ribosome, positioning it for translation. This is Small ribosomal subunit protein uS3 from Streptomyces griseus subsp. griseus (strain JCM 4626 / CBS 651.72 / NBRC 13350 / KCC S-0626 / ISP 5235).